Here is a 211-residue protein sequence, read N- to C-terminus: Probable GTP-binding protein EngB (211 aa).

One can recognise an EngB-type G domain in the interval E30 to L204. GTP-binding positions include G38–S45, G64–L68, D82–G85, T149–D152, and L182–A185. 2 residues coordinate Mg(2+): S45 and T66.

The protein belongs to the TRAFAC class TrmE-Era-EngA-EngB-Septin-like GTPase superfamily. EngB GTPase family. It depends on Mg(2+) as a cofactor.

Functionally, necessary for normal cell division and for the maintenance of normal septation. The chain is Probable GTP-binding protein EngB from Pseudomonas savastanoi pv. phaseolicola (strain 1448A / Race 6) (Pseudomonas syringae pv. phaseolicola (strain 1448A / Race 6)).